The chain runs to 205 residues: Holliday junction branch migration complex subunit RuvA (205 aa).

A domain I region spans residues 1 to 64 (MIGKLKGLID…EDQIKLFGFR (64 aa)). The domain II stretch occupies residues 65–143 (SDLEREWFRL…GFASVDPAVA (79 aa)). Positions 144-153 (HLSGAIEERS) are flexible linker. The tract at residues 153-205 (SAPRPVADAISALVNLGYGQPQAAAAIAAAARSAGDAAQTAQLIKLGLKELSK) is domain III.

This sequence belongs to the RuvA family. In terms of assembly, homotetramer. Forms an RuvA(8)-RuvB(12)-Holliday junction (HJ) complex. HJ DNA is sandwiched between 2 RuvA tetramers; dsDNA enters through RuvA and exits via RuvB. An RuvB hexamer assembles on each DNA strand where it exits the tetramer. Each RuvB hexamer is contacted by two RuvA subunits (via domain III) on 2 adjacent RuvB subunits; this complex drives branch migration. In the full resolvosome a probable DNA-RuvA(4)-RuvB(12)-RuvC(2) complex forms which resolves the HJ.

The protein localises to the cytoplasm. Functionally, the RuvA-RuvB-RuvC complex processes Holliday junction (HJ) DNA during genetic recombination and DNA repair, while the RuvA-RuvB complex plays an important role in the rescue of blocked DNA replication forks via replication fork reversal (RFR). RuvA specifically binds to HJ cruciform DNA, conferring on it an open structure. The RuvB hexamer acts as an ATP-dependent pump, pulling dsDNA into and through the RuvAB complex. HJ branch migration allows RuvC to scan DNA until it finds its consensus sequence, where it cleaves and resolves the cruciform DNA. The protein is Holliday junction branch migration complex subunit RuvA of Rhodopseudomonas palustris (strain BisA53).